Consider the following 352-residue polypeptide: RNA 3'-terminal phosphate cyclase (352 aa).

ATP contacts are provided by residues glutamine 102 and 292-296; that span reads HMGDQ. Histidine 318 acts as the Tele-AMP-histidine intermediate in catalysis.

This sequence belongs to the RNA 3'-terminal cyclase family. Type 1 subfamily.

Its subcellular location is the cytoplasm. It catalyses the reaction a 3'-end 3'-phospho-ribonucleotide-RNA + ATP = a 3'-end 2',3'-cyclophospho-ribonucleotide-RNA + AMP + diphosphate. Catalyzes the conversion of 3'-phosphate to a 2',3'-cyclic phosphodiester at the end of RNA. The mechanism of action of the enzyme occurs in 3 steps: (A) adenylation of the enzyme by ATP; (B) transfer of adenylate to an RNA-N3'P to produce RNA-N3'PP5'A; (C) and attack of the adjacent 2'-hydroxyl on the 3'-phosphorus in the diester linkage to produce the cyclic end product. The biological role of this enzyme is unknown but it is likely to function in some aspects of cellular RNA processing. This is RNA 3'-terminal phosphate cyclase from Methanopyrus kandleri (strain AV19 / DSM 6324 / JCM 9639 / NBRC 100938).